The chain runs to 426 residues: Zona pellucida sperm-binding protein 3 (426 aa).

An N-terminal signal peptide occupies residues 1 to 22; sequence MGLSYGIFICFLLLGGMELCCP. Glutamine 23 is subject to Pyrrolidone carboxylic acid. Residues 23–385 are Extracellular-facing; the sequence is QTIWPTETYY…IEGSTSPHTS (363 aa). Positions 43–305 constitute a ZP domain; that stretch reads DCLESQLVVT…KACSFIKSTK (263 aa). Cystine bridges form between cysteine 44-cysteine 138 and cysteine 76-cysteine 97. N-linked (GlcNAc...) asparagine glycosylation is found at asparagine 123 and asparagine 145. Residues threonine 154, threonine 160, and threonine 161 are each glycosylated (O-linked (GalNAc...) threonine). 2 disulfides stabilise this stretch: cysteine 215–cysteine 280 and cysteine 237–cysteine 298. Residue asparagine 244 is glycosylated (N-linked (GlcNAc...) asparagine). Positions 351–426 are cleaved as a propeptide — removed in mature form; sequence RRHVTEEAEI…PVICPASVSQ (76 aa). A helical transmembrane segment spans residues 386–406; that stretch reads VMLGLGLATVVSLTLATIVLV. The Cytoplasmic segment spans residues 407-426; it reads LAKRHRTASHPVICPASVSQ.

It belongs to the ZP domain family. ZPC subfamily. Polymers of ZP2 and ZP3 organized into long filaments cross-linked by ZP1 homodimers. Interacts with ZP1 and ZP2. Proteolytically cleaved before the transmembrane segment to yield the secreted ectodomain incorporated in the zona pellucida. Post-translationally, N-glycosylated. In terms of processing, O-glycosylated; removal of O-linked glycans may play an important role in the post-fertilization block to polyspermy. In terms of tissue distribution, expressed in oocytes.

It localises to the zona pellucida. It is found in the cell membrane. Component of the zona pellucida, an extracellular matrix surrounding oocytes which mediates sperm binding, induction of the acrosome reaction and prevents post-fertilization polyspermy. The zona pellucida is composed of 3 to 4 glycoproteins, ZP1, ZP2, ZP3, and ZP4. ZP3 is essential for sperm binding and zona matrix formation. The protein is Zona pellucida sperm-binding protein 3 (ZP3) of Canis lupus familiaris (Dog).